Consider the following 105-residue polypeptide: UPF0235 protein Mchl_2407 (105 aa).

This sequence belongs to the UPF0235 family.

The sequence is that of UPF0235 protein Mchl_2407 from Methylorubrum extorquens (strain CM4 / NCIMB 13688) (Methylobacterium extorquens).